Here is a 387-residue protein sequence, read N- to C-terminus: Exodeoxyribonuclease 7 large subunit (387 aa).

The protein belongs to the XseA family. In terms of assembly, heterooligomer composed of large and small subunits.

The protein resides in the cytoplasm. It catalyses the reaction Exonucleolytic cleavage in either 5'- to 3'- or 3'- to 5'-direction to yield nucleoside 5'-phosphates.. Bidirectionally degrades single-stranded DNA into large acid-insoluble oligonucleotides, which are then degraded further into small acid-soluble oligonucleotides. The protein is Exodeoxyribonuclease 7 large subunit of Campylobacter jejuni subsp. jejuni serotype O:2 (strain ATCC 700819 / NCTC 11168).